Reading from the N-terminus, the 289-residue chain is MADKHKHVDEVSGVETTGHEWDGIRELNNPLPRWWVYSFYATIIWAIGYAVAYPSWPMLTEATKGVLGYSSRAEVGVELAAAKAAQAGNLEQIALNSVEEIIANPQLQQFAVSAGASVFKVNCAQCHGSGAAGGQGFPNLNDDDWLWGGKPQEIYQTIAHGVRHATDGETRGSEMPPFGDMLTPEQMQQTAAYVMSLTQAPSQPHLVEQGKQVFADNCASCHGADAKGNREMGAPNLADAIWLYGEGEQAVIAQMKTPKHGVMPAWLPRLGDPVVKELAVFVHSLGGGE.

The Cytoplasmic portion of the chain corresponds to 1–33 (MADKHKHVDEVSGVETTGHEWDGIRELNNPLPR). The helical transmembrane segment at 34 to 56 (WWVYSFYATIIWAIGYAVAYPSW) threads the bilayer. At 57–289 (PMLTEATKGV…VFVHSLGGGE (233 aa)) the chain is on the periplasmic side. Cytochrome c domains follow at residues 110–198 (FAVS…MSLT) and 205–286 (HLVE…HSLG). Heme c is bound by residues C123, C126, H127, M175, C218, C221, H222, and M263.

This sequence belongs to the CcoP / FixP family. In terms of assembly, component of the cbb3-type cytochrome c oxidase at least composed of FixN, FixO, FixQ and FixP. Requires heme c as cofactor.

Its subcellular location is the cell inner membrane. Its pathway is energy metabolism; oxidative phosphorylation. Functionally, C-type cytochrome. Part of the cbb3-type cytochrome c oxidase complex. FixP subunit is required for transferring electrons from donor cytochrome c via its heme groups to FixO subunit. From there, electrons are shuttled to the catalytic binuclear center of FixN subunit where oxygen reduction takes place. The complex also functions as a proton pump. The chain is Cbb3-type cytochrome c oxidase subunit FixP from Sinorhizobium medicae (strain WSM419) (Ensifer medicae).